A 418-amino-acid chain; its full sequence is Actin-related protein 3-B (418 aa).

Belongs to the actin family. ARP3 subfamily. As to quaternary structure, component of the Arp2/3 complex composed of actr2/arp2, actr3/arp3, arpc1 (arpc1a or arpc1b), arpc2, arpc3, arpc4 and arpc5.

Its subcellular location is the cytoplasm. The protein localises to the cytoskeleton. The protein resides in the cell projection. It localises to the nucleus. Its function is as follows. ATP-binding component of the Arp2/3 complex, a multiprotein complex that mediates actin polymerization upon stimulation by nucleation-promoting factor (NPF). The Arp2/3 complex mediates the formation of branched actin networks in the cytoplasm, providing the force for cell motility. Seems to contact the pointed end of the daughter actin filament. In addition to its role in the cytoplasmic cytoskeleton, the Arp2/3 complex also promotes actin polymerization in the nucleus, thereby regulating gene transcription and repair of damaged DNA. The Arp2/3 complex promotes homologous recombination (HR) repair in response to DNA damage by promoting nuclear actin polymerization, leading to drive motility of double-strand breaks (DSBs). The protein is Actin-related protein 3-B (actr3-b) of Xenopus laevis (African clawed frog).